Consider the following 92-residue polypeptide: Probable Fe(2+)-trafficking protein (92 aa).

Belongs to the Fe(2+)-trafficking protein family.

Its function is as follows. Could be a mediator in iron transactions between iron acquisition and iron-requiring processes, such as synthesis and/or repair of Fe-S clusters in biosynthetic enzymes. In Shewanella sp. (strain W3-18-1), this protein is Probable Fe(2+)-trafficking protein.